Reading from the N-terminus, the 179-residue chain is Large ribosomal subunit protein uL6 (179 aa).

This sequence belongs to the universal ribosomal protein uL6 family. In terms of assembly, part of the 50S ribosomal subunit.

In terms of biological role, this protein binds to the 23S rRNA, and is important in its secondary structure. It is located near the subunit interface in the base of the L7/L12 stalk, and near the tRNA binding site of the peptidyltransferase center. In Prochlorococcus marinus (strain SARG / CCMP1375 / SS120), this protein is Large ribosomal subunit protein uL6.